Consider the following 913-residue polypeptide: MAYRGGGPNDYEGHDLQDLPPGSGNGSRDEGVDDVGQSLLRDPHARGTSPYEHHLGAQEPPARPVSAYSLTESYAPDAGSRTPAPPPDNFGVGTGYSQELDPQNGGFGYGRPASTVDTDESWVRRQQPGAQTGGLKRYATRKIKLQQGSVLSIDYPVPSAIKNAVQPKYRDVEGGSEEFMKMRYTAATCDPNDFTLKNGYDLRPRMYNRHTEVLIAITYYNEDKNLLSRTLHGVMQNIRDIVNLKKSTFWNKGGPAWQKIVVCLVFDGIEKADKNVLDVLATVGIYQDGVVKKDVDGKETIAHIFEYTSQLSVTPNQQLIRPVDDGPSTLPPVQFIFCLKGKNSKKINSHRWLFNAFGRILNPEICILLDAGTKPSPRSLLALWEGFYNDKDLGGACGEIHAMLGKGGKKLLNPLVAVQNFEYKISNILDKPLESSFGYVSVLPGAFSAYRFRAIMGRPLEQYFHGDHTLSKILGKKGIDGMNIFKKNMFLAEDRILCFELVAKAGQKWHLSYIKAAKGETDVPEGAAEFISQRRRWLNGSFAASLYSLMHFGRMYKSGHNLIRMFFFHIQLIYNVLNVIFTWFSLASYYLTTSIIMNLVGTPTEASADSSAHTAWPFGDSATPIINSILQYLYLAFLVIQFVLALGNRPKGSKFTYIASFIVFGFIQTYILVLSGYLVARAFNTPIGDQISLESGKAFVDSFFGGDNAAGVILVALVTIYGLNFIASFMYLDPWHMFHSFPYYLVLMSTYINILMVYAFNNWHDVSWGTKGSDKAEALPSAHISKGEKGEEAVVEEIDKPQEDIDSQFEQTVRRALEPFKEVEEVEKRDVEDSYKSFRTGLVVSWLFSNAALIVFITTDDFNAFGFSDDPNGRSAAFFSFLLYSTAVLALVRFTGFLWFLGKTGIMCCIARR.

The interval 1–135 is disordered; that stretch reads MAYRGGGPND…QQPGAQTGGL (135 aa). The N-linked (GlcNAc...) asparagine glycan is linked to Asn25. Positions 41-56 are enriched in basic and acidic residues; the sequence is RDPHARGTSPYEHHLG. The N-linked (GlcNAc...) asparagine glycan is linked to Asn539. Helical transmembrane passes span 566-586, 625-645, 658-678, 712-732, 740-760, 840-860, and 881-901; these read FFFH…WFSL, IINS…FVLA, IASF…SGYL, VILV…FMYL, SFPY…VYAF, TGLV…ITTD, and FLLY…LWFL.

Belongs to the chitin synthase family. Class III subfamily.

It localises to the cell membrane. It carries out the reaction [(1-&gt;4)-N-acetyl-beta-D-glucosaminyl](n) + UDP-N-acetyl-alpha-D-glucosamine = [(1-&gt;4)-N-acetyl-beta-D-glucosaminyl](n+1) + UDP + H(+). Its function is as follows. Polymerizes chitin, a structural polymer of the cell wall and septum, by transferring the sugar moiety of UDP-GlcNAc to the non-reducing end of the growing chitin polymer. Plays a role in cell wall integrity and is involved in tolerance to hyperosmotic conditions. Required to successfully penetrate the host plants and thus plays a key role in pathogenicity. This Verticillium dahliae (strain VdLs.17 / ATCC MYA-4575 / FGSC 10137) (Verticillium wilt) protein is Chitin synthase 1.